The sequence spans 1685 residues: PHD and RING finger domain-containing protein 1 (1685 aa).

The disordered stretch occupies residues 1–82; the sequence is MDDDNLDELV…GSEDSEDGIE (82 aa). Positions 41 to 81 are enriched in acidic residues; sequence DSEDDTGSEQDDDTDGEETEGLSEEEDPEDRSGSEDSEDGI. The segment at 109 to 150 adopts an RING-type; degenerate zinc-finger fold; the sequence is CPICLNAFRDQAVGTPETCAHYFCLDCIIEWSRNANSCPVDR. The PHD-type zinc finger occupies 188–238; the sequence is PTFCEVCGRSDREDRLLLCDGCDAGYHMECLDPPLQEVPVDEWFCPECAVP. 5 disordered regions span residues 333–390, 449–483, 537–590, 606–777, and 809–860; these read PLTP…KLKN, DSNGEQSADPPSPLSAKRRVLSRSALQSHQPVARP, SAKR…GLSC, TPVR…GSSF, and KVQR…LLPS. Residue threonine 335 is modified to Phosphothreonine. 2 stretches are compositionally biased toward basic residues: residues 339–364 and 372–387; these read PAKRKRKAGRRKKVLGRKKTRSRSSV and RAKKRQHRVRRTKGRK. 2 positions are modified to phosphoserine: serine 450 and serine 460. Polar residues-rich tracts occupy residues 606 to 625 and 637 to 662; these read TPVRSDSSVTPRSGLSGNLS and SPRLNGSNVRVGSASTKTMTHSNFPS. The segment covering 671–682 has biased composition (basic and acidic residues); sequence QKTDPRRPDFSK. 2 stretches are compositionally biased toward polar residues: residues 694–709 and 737–751; these read SNSTQDQAPASGQTVE and SSRGPQETGSHTSGS. 9 positions are modified to phosphoserine: serine 817, serine 848, serine 849, serine 867, serine 870, serine 922, serine 948, serine 984, and serine 1002. The span at 835-860 shows a compositional bias: low complexity; that stretch reads PFDPTGSDSSPPSSSPESLGSGLLPS. 3 disordered regions span residues 892-1229, 1290-1355, and 1369-1390; these read GTEM…VSEV, QLDD…APSD, and TTLSTPGVLPMGKDSPLLSGRG. Residues 922–934 are compositionally biased toward acidic residues; sequence SDLEQEGLGEIEP. Over residues 1001–1010 the composition is skewed to low complexity; the sequence is SSRSRSTSSS. 2 stretches are compositionally biased toward basic residues: residues 1011–1031 and 1054–1064; these read RSRKKTKKKKKVAREHQRTRS and KRHRAKTKSRR. The span at 1065 to 1075 shows a compositional bias: basic and acidic residues; it reads SSSDRASSQDR. 2 stretches are compositionally biased toward basic residues: residues 1089 to 1102 and 1117 to 1129; these read GPWGHGRCWRKSRS and SRRRKRRHSGSRS. 2 stretches are compositionally biased toward basic and acidic residues: residues 1130–1143 and 1151–1165; these read RGRDGSPHSSLERD and RSRERMDKKESMTRS. A phosphoserine mark is found at serine 1135 and serine 1139. A compositionally biased stretch (basic residues) spans 1181-1191; that stretch reads RTRRPHSREKH. The segment covering 1192-1201 has biased composition (basic and acidic residues); the sequence is PHSPEKKGAV. Phosphoserine is present on serine 1205. Low complexity predominate over residues 1292-1305; that stretch reads DDMSSPPSPESTDS. Serine 1372 and serine 1383 each carry phosphoserine. Phosphothreonine is present on threonine 1416. 3 disordered regions span residues 1421–1448, 1466–1501, and 1569–1591; these read EAEASTPALDRDPRTPLQRPQRPQEGDW, LPPPIHVLQESGLPDADPSQPPGVPRAEGPPAVGTL, and LAVPTTNNSEERTATPKTAAEKT. Residues 1577–1591 are compositionally biased toward basic and acidic residues; sequence SEERTATPKTAAEKT. A coiled-coil region spans residues 1589–1615; that stretch reads EKTKKEEYMKKLHMQERAVEEVKLAIK.

Interacts with POLR2A (via the C-terminal domain).

This Rattus norvegicus (Rat) protein is PHD and RING finger domain-containing protein 1.